A 525-amino-acid polypeptide reads, in one-letter code: MAILSSALVTIDLPVTLVSLLVGSIFYFCYLTVYRLFLSPIAHFPGPKLAAWTYWYEFWYDVIAEPEYTFKIGRLHKIYGPVVRINPDEIHIADPDFYDTIYAGSGRKRDKWDWITRSFGVDESLIGTLKHDEHRVRRASLSPYFSKQSVRALQPLIDRNMAILLDRLREFAKSGSPLKLDDAYAALTNDIVEDYAFGRSDHRLEAPDFDPSFRDAMLQGGKAGHVLKHFTWLMDLLKKLPDSLLLKLSPAMGAYSQLQTSVKRQVAEIQHAHQMHTYDKTRRTIFHEILNSKLSDYDKSTDRLWQEGEVVVAAGTITTAWALGVSTYFVLATPDILRKLKTELEAAIPDPSQPLNLITLEALPFLTGVVQEGVRLSHAISHRLHRICPDETLIYQDNDNQREWRIPPGTPLSMTSNLVHHDERVFPDSHAFKPERWLDNARLERYLVSFGKGGRACLGINLAYAELYLTLAALFRVYGTEQVKGKDDVGTLQLFETSAADLVITSDTVVPVMPEDSKGLRVKVS.

The helical transmembrane segment at 13–33 (LPVTLVSLLVGSIFYFCYLTV) threads the bilayer. A heme-binding site is contributed by Cys-457.

It belongs to the cytochrome P450 family. The cofactor is heme.

It localises to the membrane. It functions in the pathway secondary metabolite biosynthesis; terpenoid biosynthesis. Functionally, cytochrome P450 monooxygenase; part of the gene cluster that mediates the biosynthesis of terpestacin. The bifunctional terpene synthase tpcA converts isopentenyl diphosphate (IPP) and dimethylallyl diphosphate (DMAPP) into the sesterterpene preterpestacin I. The C-terminal prenyltransferase (PT) domain of tpcA catalyzes formation of GFPP, whereas the N-terminal terpene cyclase (TC) domain catalyzes the cyclization of GFPP into preterpestacin I. The cytochrome P450 monooxygenase tpcB then hydroxylates preterpestacin I to yield 24-hydroxypreterpstacin I (renamed as preterpestacin II) whereas the cytochrome P450 monooxygenase tpcC further hydroxylates preterpestacin II to yield 16,17-dihydroxypreterpestacin II (renamed as preterpestacin III). Finally, the FAD-dependent monooxygenase tpcD converts preterpestacin III into terpestacin. This Cochliobolus heterostrophus (strain C5 / ATCC 48332 / race O) (Southern corn leaf blight fungus) protein is Cytochrome P450 monooxygenase tpcC.